A 151-amino-acid chain; its full sequence is Aspartate carbamoyltransferase regulatory chain (151 aa).

Residues C108, C113, C138, and C141 each contribute to the Zn(2+) site.

Belongs to the PyrI family. In terms of assembly, contains catalytic and regulatory chains. It depends on Zn(2+) as a cofactor.

Functionally, involved in allosteric regulation of aspartate carbamoyltransferase. The protein is Aspartate carbamoyltransferase regulatory chain of Pyrobaculum arsenaticum (strain DSM 13514 / JCM 11321 / PZ6).